The sequence spans 224 residues: MAEKTGLFISFEGGEGAGKSTQIRTLAEALRGRGFEVVVTREPGGSPGAEAVRHVILSGAAESFGVRMEAILFAAARNDHVEEVIRPALARGEIVLCDRFLDSSRVYQGTTGNLEPDFIETLQRIAIDGVVPELTLIFDIAAEKGLARARKRADEGATPDRFEKEEIETHEKRREAYLDIALAEPRRCRIVNADQPEDKVTEDVMSFVEPLLERAGNAADAAHE.

13-20 contributes to the ATP binding site; it reads GGEGAGKS.

This sequence belongs to the thymidylate kinase family.

It catalyses the reaction dTMP + ATP = dTDP + ADP. In terms of biological role, phosphorylation of dTMP to form dTDP in both de novo and salvage pathways of dTTP synthesis. In Agrobacterium fabrum (strain C58 / ATCC 33970) (Agrobacterium tumefaciens (strain C58)), this protein is Thymidylate kinase.